We begin with the raw amino-acid sequence, 213 residues long: Response regulator GacA (213 aa).

One can recognise a Response regulatory domain in the interval 3–119 (RVLVVDDHDL…EMVQAIRLVF (117 aa)). Asp-54 carries the 4-aspartylphosphate modification. One can recognise an HTH luxR-type domain in the interval 142–207 (SDSPFDALSE…ELTLLAVRHG (66 aa)). Positions 166 to 185 (VQIISDKLCLSPKTVNTYRY) form a DNA-binding region, H-T-H motif.

Phosphorylated by GacS.

Its function is as follows. Member of the two-component regulatory system GacA/GacS which controls the expression of secondary metabolites and extracellular products. Acts (probably primarily) by activating expression of CsrA1 and CsrA2 antagonist small RNAs (sRNA) RsmX, RsmY and RsmZ which bind to and prevent translation repression by CsrA1 and CsrA2. Involved in the regulation of secondary metabolism and in the synthesis of the antifungal factors cyanide, 2,4-diacetylphloroglucinol and pyoluteorin. Involved in synthesis of the autoinducing signal (unrelated to N-acylhomoserine lactones, induces the Gac/Csr cascade). Exercises positive post-transcriptional control over the hcnABC and aprA genes; acts upstream of CsrA2 (rsmA). Controls expression of csrA1 (rsmE) and csrA2. This chain is Response regulator GacA, found in Pseudomonas protegens (strain DSM 19095 / LMG 27888 / CFBP 6595 / CHA0).